A 330-amino-acid chain; its full sequence is MSDRWYVGVDVGGTTIKMAFLTTAGEIVDKWEIPTNKQDGGALITTNIADALDKRLSGHHKSKSDLIGIGLGAPGFIEMDTGFIYHAVNIGWRDFPLKDKLEEETKLPVIVDNDANIAALGEMWKGAGDGAKNMLLITLGTGVGGGIVANGNILHGVNGMAGEIGHITVIPEGGAPCNCGKTGCLETVASATGIARIATEGVTEHKESQLALDYDKHGVLTAKDVFSAADASDAFALSVVDHIAYYLGFAIANLANALNPEKIVIGGGVSKAGDTLLKPIKQHFEAYALPRVADGAEFRIATLGNDAGVIGGGWLVKQQENSMEKGNETE.

Belongs to the ROK (NagC/XylR) family.

The protein resides in the cytoplasm. The catalysed reaction is D-glucose + ATP = D-glucose 6-phosphate + ADP + H(+). The chain is Glucokinase (glcK) from Halalkalibacterium halodurans (strain ATCC BAA-125 / DSM 18197 / FERM 7344 / JCM 9153 / C-125) (Bacillus halodurans).